An 86-amino-acid polypeptide reads, in one-letter code: Class II hydrophobin 2 (86 aa).

The first 15 residues, 1 to 15, serve as a signal peptide directing secretion; it reads MQFFAVALFATSALA. 4 cysteine pairs are disulfide-bonded: cysteine 18/cysteine 67, cysteine 28/cysteine 58, cysteine 29/cysteine 41, and cysteine 68/cysteine 79.

Belongs to the cerato-ulmin hydrophobin family. Homodimer. Homodimers further self-assemble to form highly ordered films at water-air interfaces through intermolecular interactions.

It localises to the secreted. Its subcellular location is the spore wall. It is found in the cell wall. Its function is as follows. Aerial growth, conidiation, and dispersal of filamentous fungi in the environment rely upon a capability of their secreting small amphipathic proteins called hydrophobins (HPBs) with low sequence identity. Class I can self-assemble into an outermost layer of rodlet bundles on aerial cell surfaces, conferring cellular hydrophobicity that supports fungal growth, development and dispersal; whereas Class II form highly ordered films at water-air interfaces through intermolecular interactions but contribute nothing to the rodlet structure. Hbf2 is a class II hydrophobin that is involved in sporuration. The polypeptide is Class II hydrophobin 2 (Hypocrea jecorina (Trichoderma reesei)).